Here is a 101-residue protein sequence, read N- to C-terminus: Small ribosomal subunit protein uS14 (101 aa).

Belongs to the universal ribosomal protein uS14 family. Part of the 30S ribosomal subunit. Contacts proteins S3 and S10.

In terms of biological role, binds 16S rRNA, required for the assembly of 30S particles and may also be responsible for determining the conformation of the 16S rRNA at the A site. The polypeptide is Small ribosomal subunit protein uS14 (Actinobacillus succinogenes (strain ATCC 55618 / DSM 22257 / CCUG 43843 / 130Z)).